A 126-amino-acid polypeptide reads, in one-letter code: Fluoride-specific ion channel FluC 2 (126 aa).

4 helical membrane passes run 7–27 (MWVG…GLSI), 37–57 (LGTF…SILF), 65–85 (YGDL…TTFS), and 101–121 (AIAA…AAFG). Na(+)-binding residues include G79 and T82.

It belongs to the fluoride channel Fluc/FEX (TC 1.A.43) family.

It is found in the cell inner membrane. It catalyses the reaction fluoride(in) = fluoride(out). Its activity is regulated as follows. Na(+) is not transported, but it plays an essential structural role and its presence is essential for fluoride channel function. In terms of biological role, fluoride-specific ion channel. Important for reducing fluoride concentration in the cell, thus reducing its toxicity. This chain is Fluoride-specific ion channel FluC 2, found in Yersinia pseudotuberculosis serotype I (strain IP32953).